Here is a 197-residue protein sequence, read N- to C-terminus: Phosphoheptose isomerase (197 aa).

In terms of domain architecture, SIS spans 37–197 (MLQCLMNDGK…CIDSVLLEGM (161 aa)). 52 to 54 (NGG) is a binding site for substrate. Zn(2+) contacts are provided by His61 and Glu65. Substrate-binding positions include Glu65, 94-95 (ND), 120-122 (STS), Ser125, and Gln175. 2 residues coordinate Zn(2+): Gln175 and His183.

Belongs to the SIS family. GmhA subfamily. Homotetramer. Requires Zn(2+) as cofactor.

Its subcellular location is the cytoplasm. It catalyses the reaction 2 D-sedoheptulose 7-phosphate = D-glycero-alpha-D-manno-heptose 7-phosphate + D-glycero-beta-D-manno-heptose 7-phosphate. The protein operates within carbohydrate biosynthesis; D-glycero-D-manno-heptose 7-phosphate biosynthesis; D-glycero-alpha-D-manno-heptose 7-phosphate and D-glycero-beta-D-manno-heptose 7-phosphate from sedoheptulose 7-phosphate: step 1/1. In terms of biological role, catalyzes the isomerization of sedoheptulose 7-phosphate in D-glycero-D-manno-heptose 7-phosphate. In Neisseria meningitidis serogroup C (strain 053442), this protein is Phosphoheptose isomerase.